Reading from the N-terminus, the 903-residue chain is DNA-directed DNA polymerase (903 aa).

The tract at residues 103-340 (YDHTKIRVAN…VLQIDAKRQF (238 aa)) is 3'-5'exonuclease. Residues aspartate 114, glutamate 116, and aspartate 222 each coordinate Mg(2+). Positions 248–264 (TRVKVIENMYGSREIIT) are beta hairpin. The Mg(2+) site is built by aspartate 327, aspartate 411, and leucine 412. Residues 380 to 903 (IPQGRSHPVQ…KASLFDMFDF (524 aa)) form a polymerase region. Residues 414–416 (SLY), arginine 482, and lysine 560 each bind substrate. A Mg(2+)-binding site is contributed by aspartate 623. Residues 705-708 (KKRY) are binding of DNA in B-conformation. The interval 897 to 903 (LFDMFDF) is interaction with the polymerase clamp.

This sequence belongs to the DNA polymerase type-B family. In terms of assembly, part of the replicase complex that includes the DNA polymerase, the polymerase clamp, the clamp loader complex, the single-stranded DNA binding protein, and the primase/helicase. Interacts with the polymerase clamp; this interaction constitutes the polymerase holoenzyme. Requires Mg(2+) as cofactor.

It carries out the reaction DNA(n) + a 2'-deoxyribonucleoside 5'-triphosphate = DNA(n+1) + diphosphate. In terms of biological role, replicates the viral genomic DNA. This polymerase possesses two enzymatic activities: DNA synthesis (polymerase) and an exonucleolytic activity that degrades single-stranded DNA in the 3'- to 5'-direction for proofreading purpose. The chain is DNA-directed DNA polymerase (43) from Escherichia coli (Bacteriophage RB69).